Reading from the N-terminus, the 343-residue chain is UDP-3-O-acylglucosamine N-acyltransferase (343 aa).

His-245 functions as the Proton acceptor in the catalytic mechanism.

The protein belongs to the transferase hexapeptide repeat family. LpxD subfamily. In terms of assembly, homotrimer.

The enzyme catalyses a UDP-3-O-[(3R)-3-hydroxyacyl]-alpha-D-glucosamine + a (3R)-hydroxyacyl-[ACP] = a UDP-2-N,3-O-bis[(3R)-3-hydroxyacyl]-alpha-D-glucosamine + holo-[ACP] + H(+). The protein operates within bacterial outer membrane biogenesis; LPS lipid A biosynthesis. Functionally, catalyzes the N-acylation of UDP-3-O-acylglucosamine using 3-hydroxyacyl-ACP as the acyl donor. Is involved in the biosynthesis of lipid A, a phosphorylated glycolipid that anchors the lipopolysaccharide to the outer membrane of the cell. This Phenylobacterium zucineum (strain HLK1) protein is UDP-3-O-acylglucosamine N-acyltransferase.